Here is a 1115-residue protein sequence, read N- to C-terminus: G-protein coupled receptor GRL101 (1115 aa).

Positions 1–24 (MATMSGTTIVCLIYLTTMLGNSQG) are cleaved as a signal peptide. The Extracellular segment spans residues 25–767 (VNLKIESPSP…SCEDLMSNHV (743 aa)). 12 consecutive LDL-receptor class A domains span residues 36 to 79 (TLCS…TCGC), 77 to 115 (CGCL…ECDI), 116 to 155 (YICP…ICER), 156 to 196 (RECV…ACDS), 195 to 232 (DSDK…NCKL), 231 to 269 (KLCD…VCAN), 272 to 318 (YGCP…YCSN), 320 to 363 (SECK…SCLA), 365 to 403 (PKCS…NCEN), 404 to 442 (HQCA…DCDP), 444 to 485 (PVCE…NCSQ), and 486 to 525 (HICL…NCRY). Cystine bridges form between C38–C53, C46–C66, C60–C77, C79–C91, C86–C104, C98–C113, C118–C131, C138–C153, C158–C170, C165–C183, C177–C194, C202–C220, C214–C230, C233–C245, C240–C258, and C252–C267. N87 is a glycosylation site (N-linked (GlcNAc...) asparagine). An N-linked (GlcNAc...) asparagine glycan is attached at N166. An N-linked (GlcNAc...) asparagine glycan is attached at N269. 3 cysteine pairs are disulfide-bonded: C274-C291, C282-C304, and C298-C316. Residue N318 is glycosylated (N-linked (GlcNAc...) asparagine). 15 disulfides stabilise this stretch: C322–C339, C334–C352, C346–C361, C367–C379, C374–C392, C386–C401, C406–C418, C413–C431, C425–C440, C446–C458, C453–C474, C465–C483, C488–C500, C495–C513, and C507–C523. An N-linked (GlcNAc...) asparagine glycan is attached at N482. N502 is a glycosylation site (N-linked (GlcNAc...) asparagine). Residues 518 to 562 (WDENNCRYWCPHGQAICQCEGVTMDCTGQKLKEMPVQQMEEDLSK) form the LRRNT domain. N-linked (GlcNAc...) asparagine glycosylation occurs at N571. LRR repeat units lie at residues 584–605 (KVTY…SFQN), 608–629 (KLTH…SLLG), 632–653 (NLKQ…TFSS), 656–677 (HLTV…MFKG), 680–701 (QITV…AFNN), and 704–725 (NVRL…VFMG). N618 and N624 each carry an N-linked (GlcNAc...) asparagine glycan. A glycan (N-linked (GlcNAc...) asparagine) is linked at N685. A helical transmembrane segment spans residues 768-788 (LRVSIWVLGVIALVGNFVVIF). At 789 to 801 (WRVRDFRGGKVHS) the chain is on the cytoplasmic side. A helical membrane pass occupies residues 802–822 (FLITNLAIGDFLMGVYLLIIA). At 823–857 (TADTYYRGVYISHDENWKQSGLCQFAGFVSTFSSE) the chain is on the extracellular side. The helical transmembrane segment at 858 to 878 (LSVLTLSTITLDRLICILFPL) threads the bilayer. Residues 879-887 (RRTRLGLRQ) lie on the Cytoplasmic side of the membrane. A helical membrane pass occupies residues 888–908 (AIIVMSCIWVLVFLLAVLPLL). The Extracellular segment spans residues 909-941 (GFSYFENFYGRSGVCLALHVTPDRRPGWEYSVG). Residues 942–962 (VFILLNLLSFVLIASSYLWMF) form a helical membrane-spanning segment. The Cytoplasmic portion of the chain corresponds to 963 to 988 (SVAKKTRSAVRTAESKNDNAMARRMT). A helical membrane pass occupies residues 989 to 1009 (LIVMTDFCCWVPIIVLGFVSL). Residues 1010 to 1017 (AGARADDQ) are Extracellular-facing. A helical transmembrane segment spans residues 1018-1038 (VYAWIAVFVLPLNSATNPVIY). The Cytoplasmic portion of the chain corresponds to 1039–1115 (TLSTAPFLGN…YYNTELHSDS (77 aa)).

The protein belongs to the G-protein coupled receptor 1 family. As to expression, predominantly expressed in a small number of neurons within the central nervous system and to a lesser extent in the heart.

It localises to the cell membrane. In terms of biological role, might directly transduce signals carried by large extracellular lipoprotein complexes into neuronal events. The polypeptide is G-protein coupled receptor GRL101 (Lymnaea stagnalis (Great pond snail)).